The following is a 184-amino-acid chain: Dual specificity protein phosphatase 22 (184 aa).

Gly2 is lipidated: N-myristoyl glycine. The 141-residue stretch at 4–144 folds into the Tyrosine-protein phosphatase domain; sequence GMNKILPGLY…LQEFEKHEVH (141 aa). Ser58 is subject to Phosphoserine. The active-site Phosphocysteine intermediate is Cys88. A protein contacts are provided by Leu89, Ala90, Val92, Ser93, and Arg94.

Belongs to the protein-tyrosine phosphatase family. Non-receptor class dual specificity subfamily. Monomer. Interacts with LCK; the interaction is direct. Interacts with UBR2; the interaction is direct. In terms of processing, myristoylation regulates subcellular location, and is necessary for activation of JNK. As to expression, ubiquitous. Highest expression seen in heart, placenta, lung, liver, kidney and pancreas.

It localises to the cytoplasm. It catalyses the reaction O-phospho-L-tyrosyl-[protein] + H2O = L-tyrosyl-[protein] + phosphate. The enzyme catalyses O-phospho-L-seryl-[protein] + H2O = L-seryl-[protein] + phosphate. The catalysed reaction is O-phospho-L-threonyl-[protein] + H2O = L-threonyl-[protein] + phosphate. Its function is as follows. Dual specificity phosphatase; can dephosphorylate both phosphotyrosine and phosphoserine or phosphothreonine residues. Activates the JNK signaling pathway. Inhibits T-cell receptor signaling and T-cell mediated immune responses, acting, at least in part, by inducing degradation of E3 ubiquitin ligase UBR2. Dephosphorylates and thereby induces 'Lys-48'-linked ubiquitination of UBR2, leading to proteasomal degradation of UBR2. Dephosphorylates and thereby inactivates tyrosine kinase LCK. Inhibits UBR2-mediated 'Lys-63'-linked ubiquitination of LCK. May play a role in B-cell receptor (BCR) signaling and B-cell function. This chain is Dual specificity protein phosphatase 22 (DUSP22), found in Homo sapiens (Human).